We begin with the raw amino-acid sequence, 85 residues long: Small ribosomal subunit protein bS20 (85 aa).

Residues 1 to 25 (MANIKSAIKRAKLSEERRAHNASIK) are disordered.

This sequence belongs to the bacterial ribosomal protein bS20 family.

Binds directly to 16S ribosomal RNA. The chain is Small ribosomal subunit protein bS20 from Bacillus anthracis (strain A0248).